Here is a 68-residue protein sequence, read N- to C-terminus: Protein transport protein Sec61 subunit gamma (68 aa).

Over 1–32 the chain is Cytoplasmic; sequence MDQVMQFVEPSRQFVKDSIRLVKRCTKPDRKE. The chain crosses the membrane as a helical span at residues 33–61; it reads FQKIAMATAIGFAIMGFIGFFVKLIHIPI. At 62–68 the chain is on the extracellular side; it reads NNIIVGS.

The protein belongs to the SecE/SEC61-gamma family. In terms of assembly, the SEC61 channel-forming translocon complex consists of channel-forming core components SEC61A1, SEC61B and SEC61G and different auxiliary components such as SEC62 and SEC63. The SEC61 channel associates with the multi-pass translocon (MPT) complex.

The protein localises to the endoplasmic reticulum membrane. Component of SEC61 channel-forming translocon complex that mediates transport of signal peptide-containing precursor polypeptides across the endoplasmic reticulum (ER). Forms a ribosome receptor and a gated pore in the ER membrane, both functions required for cotranslational translocation of nascent polypeptides. The SEC61 channel is also involved in ER membrane insertion of transmembrane proteins: it mediates membrane insertion of the first few transmembrane segments of proteins, while insertion of subsequent transmembrane regions of multi-pass membrane proteins is mediated by the multi-pass translocon (MPT) complex. This is Protein transport protein Sec61 subunit gamma (sec61g) from Xenopus laevis (African clawed frog).